Here is a 566-residue protein sequence, read N- to C-terminus: Putative ABC transporter ATP-binding protein lp_0149 (566 aa).

ABC transporter domains lie at 6–247 and 302–536; these read ISFK…GLRE and LAIE…ASLA. Residues 40–47 and 335–342 contribute to the ATP site; these read GPSGSGKS and GQNGTGKS.

This sequence belongs to the ABC transporter superfamily.

It is found in the cell membrane. Functionally, probably part of an ABC transporter complex. Responsible for energy coupling to the transport system. The protein is Putative ABC transporter ATP-binding protein lp_0149 of Lactiplantibacillus plantarum (strain ATCC BAA-793 / NCIMB 8826 / WCFS1) (Lactobacillus plantarum).